The sequence spans 150 residues: Large ribosomal subunit protein bL9 (150 aa).

Belongs to the bacterial ribosomal protein bL9 family.

Its function is as follows. Binds to the 23S rRNA. The polypeptide is Large ribosomal subunit protein bL9 (Streptococcus gordonii (strain Challis / ATCC 35105 / BCRC 15272 / CH1 / DL1 / V288)).